The sequence spans 146 residues: Hemoglobin subunit beta (146 aa).

The residue at position 1 (Val-1) is an N-acetylvaline. The Globin domain maps to Gln-2–His-146. Ser-44 carries the phosphoserine modification. Lys-59 bears the N6-acetyllysine mark. His-63 contacts heme b. Lys-82 carries the N6-acetyllysine modification. His-92 lines the heme b pocket. Residue Cys-93 is modified to S-nitrosocysteine. Lys-144 carries the N6-acetyllysine modification.

The protein belongs to the globin family. Heterotetramer of two alpha chains and two beta chains. In terms of tissue distribution, red blood cells.

Its function is as follows. Involved in oxygen transport from the lung to the various peripheral tissues. The sequence is that of Hemoglobin subunit beta (HBB) from Equus caballus (Horse).